Here is a 267-residue protein sequence, read N- to C-terminus: MNALLSNPFKEGLRKGDTQIGLWLSSTTSYMAEIAATSGYDWLLIDGEHAPNTVQDLYHQLQAIAPYASQPVIRPIEGSKALIKQVLDIGAQTLLIPMVDTAEQARQVVSATRYPPLGQRGVGASVARAARWGRIDNYMAQANESLCLLVQVESKVALENLDAILEVEGIDGVFIGPADLSASLGYPDNAGHPEVQRIIEACIYRIRAAGKAAGFLAVDPAMAQKCLAWGANFVAVGVDTMLYTEALDNRLVMFKSVQSVSTAKRSY.

His49 functions as the Proton acceptor in the catalytic mechanism. Residue Gln151 participates in substrate binding. Glu153 serves as a coordination point for Mg(2+). Residues Ala178 and Asp179 each coordinate substrate. Asp179 provides a ligand contact to Mg(2+).

Belongs to the HpcH/HpaI aldolase family. KDR aldolase subfamily. As to quaternary structure, homohexamer. It depends on Mg(2+) as a cofactor.

The enzyme catalyses 2-dehydro-3-deoxy-L-rhamnonate = (S)-lactaldehyde + pyruvate. Catalyzes the reversible retro-aldol cleavage of 2-keto-3-deoxy-L-rhamnonate (KDR) to pyruvate and lactaldehyde. The polypeptide is 2-keto-3-deoxy-L-rhamnonate aldolase (Salmonella paratyphi A (strain ATCC 9150 / SARB42)).